The chain runs to 107 residues: Phosphoribosyl-ATP pyrophosphatase (107 aa).

The protein belongs to the PRA-PH family.

It localises to the cytoplasm. It carries out the reaction 1-(5-phospho-beta-D-ribosyl)-ATP + H2O = 1-(5-phospho-beta-D-ribosyl)-5'-AMP + diphosphate + H(+). It participates in amino-acid biosynthesis; L-histidine biosynthesis; L-histidine from 5-phospho-alpha-D-ribose 1-diphosphate: step 2/9. The protein is Phosphoribosyl-ATP pyrophosphatase of Bacillus cereus (strain ZK / E33L).